We begin with the raw amino-acid sequence, 243 residues long: tRNA (guanine-N(7)-)-methyltransferase (243 aa).

S-adenosyl-L-methionine-binding residues include glutamate 74, glutamate 99, aspartate 126, and aspartate 149. Aspartate 149 is a catalytic residue. Substrate-binding positions include lysine 153, aspartate 185, and 221-224 (TKFE).

This sequence belongs to the class I-like SAM-binding methyltransferase superfamily. TrmB family.

It carries out the reaction guanosine(46) in tRNA + S-adenosyl-L-methionine = N(7)-methylguanosine(46) in tRNA + S-adenosyl-L-homocysteine. Its pathway is tRNA modification; N(7)-methylguanine-tRNA biosynthesis. In terms of biological role, catalyzes the formation of N(7)-methylguanine at position 46 (m7G46) in tRNA. The chain is tRNA (guanine-N(7)-)-methyltransferase from Psychromonas ingrahamii (strain DSM 17664 / CCUG 51855 / 37).